Consider the following 360-residue polypeptide: Peptide chain release factor 1 (360 aa).

Glutamine 235 is modified (N5-methylglutamine). The tract at residues 284–303 is disordered; it reads RERQSKEAAERKSLVGSGDR.

It belongs to the prokaryotic/mitochondrial release factor family. Methylated by PrmC. Methylation increases the termination efficiency of RF1.

It is found in the cytoplasm. Functionally, peptide chain release factor 1 directs the termination of translation in response to the peptide chain termination codons UAG and UAA. In Bordetella avium (strain 197N), this protein is Peptide chain release factor 1.